A 232-amino-acid chain; its full sequence is Cytidylate kinase (232 aa).

10-18 (GPAASGKST) serves as a coordination point for ATP.

It belongs to the cytidylate kinase family. Type 1 subfamily.

Its subcellular location is the cytoplasm. The catalysed reaction is CMP + ATP = CDP + ADP. The enzyme catalyses dCMP + ATP = dCDP + ADP. The polypeptide is Cytidylate kinase (Phytoplasma mali (strain AT)).